A 38-amino-acid polypeptide reads, in one-letter code: Photosystem II reaction center protein L (38 aa).

The chain crosses the membrane as a helical span at residues 17 to 37 (SLYWGLLLIFVLAVLFSSYIF).

It belongs to the PsbL family. In terms of assembly, PSII is composed of 1 copy each of membrane proteins PsbA, PsbB, PsbC, PsbD, PsbE, PsbF, PsbH, PsbI, PsbJ, PsbK, PsbL, PsbM, PsbT, PsbY, PsbZ, Psb30/Ycf12, at least 3 peripheral proteins of the oxygen-evolving complex and a large number of cofactors. It forms dimeric complexes.

The protein resides in the plastid. The protein localises to the chloroplast thylakoid membrane. In terms of biological role, one of the components of the core complex of photosystem II (PSII). PSII is a light-driven water:plastoquinone oxidoreductase that uses light energy to abstract electrons from H(2)O, generating O(2) and a proton gradient subsequently used for ATP formation. It consists of a core antenna complex that captures photons, and an electron transfer chain that converts photonic excitation into a charge separation. This subunit is found at the monomer-monomer interface and is required for correct PSII assembly and/or dimerization. This Euglena gracilis protein is Photosystem II reaction center protein L.